The primary structure comprises 372 residues: High-affinity lysophosphatidic acid receptor (372 aa).

At 1–38 (MGCNNTALDNCMLPNLSIATAPLDLRFAFSTPLRMLLA) the chain is on the extracellular side. N-linked (GlcNAc...) asparagine glycans are attached at residues Asn4 and Asn15. A helical transmembrane segment spans residues 39–59 (IIMILMIAIAFLGNAIVCLIV). Residues 60–80 (YQKPAMRSAINLLLATLAFSD) are Cytoplasmic-facing. The chain crosses the membrane as a helical span at residues 81–101 (IMLSLFCMPFTAVTIITGSWL). At 102 to 108 (FGTQFCQ) the chain is on the extracellular side. Residues 109 to 129 (ISAMLYWFFVLEGVAILLIIS) traverse the membrane as a helical segment. Residues 130–149 (VDRFLIIVQRQDKLNPHRAK) lie on the Cytoplasmic side of the membrane. The chain crosses the membrane as a helical span at residues 150-170 (IMIAASWVLSFCISLPSVVGW). Residues 171-198 (TLVEVPTRAPQCVLGYTEFSADRVYAVM) lie on the Extracellular side of the membrane. Residues 199–219 (LIVAVFFIPFSVMLYSYLCIL) traverse the membrane as a helical segment. Residues 220–268 (NTVRRNAVRIHTHADSLCLSQVSKLGLMGLQRPHQMNVDMSFKTRAFTT) lie on the Cytoplasmic side of the membrane. A helical transmembrane segment spans residues 269-289 (ILILFIGFSLCWLPHSVFSLL). The Extracellular portion of the chain corresponds to 290 to 301 (SVFSRTFYYSSS). A helical transmembrane segment spans residues 302-324 (FYSISTCTLWLTYLKSVFNPVIY). Residues 325–372 (CWRIKKFREACLEFMPKTFKILPNVRGRTRRRIRPSTIYVCGEHQSAV) are Cytoplasmic-facing.

It belongs to the G-protein coupled receptor 1 family. In terms of tissue distribution, ubiquitously expressed.

Its subcellular location is the cell membrane. Its function is as follows. Highly selective receptor for lysophosphatidic acid (LPA), a mediator of diverse cellular activities. The protein is High-affinity lysophosphatidic acid receptor of Xenopus laevis (African clawed frog).